The following is a 325-amino-acid chain: Ribose-phosphate pyrophosphokinase (325 aa).

ATP contacts are provided by residues 45 to 47 (NGE) and 104 to 105 (RQ). Residues histidine 138 and aspartate 178 each contribute to the Mg(2+) site. Lysine 202 is an active-site residue. Residues arginine 204, aspartate 230, and 234–238 (DTGGT) contribute to the D-ribose 5-phosphate site.

The protein belongs to the ribose-phosphate pyrophosphokinase family. Class I subfamily. Homohexamer. It depends on Mg(2+) as a cofactor.

Its subcellular location is the cytoplasm. The enzyme catalyses D-ribose 5-phosphate + ATP = 5-phospho-alpha-D-ribose 1-diphosphate + AMP + H(+). It participates in metabolic intermediate biosynthesis; 5-phospho-alpha-D-ribose 1-diphosphate biosynthesis; 5-phospho-alpha-D-ribose 1-diphosphate from D-ribose 5-phosphate (route I): step 1/1. Its function is as follows. Involved in the biosynthesis of the central metabolite phospho-alpha-D-ribosyl-1-pyrophosphate (PRPP) via the transfer of pyrophosphoryl group from ATP to 1-hydroxyl of ribose-5-phosphate (Rib-5-P). This is Ribose-phosphate pyrophosphokinase from Corynebacterium glutamicum (strain ATCC 13032 / DSM 20300 / JCM 1318 / BCRC 11384 / CCUG 27702 / LMG 3730 / NBRC 12168 / NCIMB 10025 / NRRL B-2784 / 534).